An 866-amino-acid polypeptide reads, in one-letter code: MAYHPVYNETMSMGGGSSNEFGQWLDKQLVPFDTSSGSLRVELLHGNLDIWVKEAKHLPNMDGFHNTLVGGMFFGLGRRNHKVDGENSSKITSDPYVTVSISGAVIGRTFVISNSENPVWMQHFDVPVAHSAAKVHFVVKDSDIIGSQIIGAVEIPTEQLCSGNRIEGLFPILNSRGKPCKQGAVLSLSIQYIPMERMRLYQKGVGFGVECVGVPGTYFPLRKGGRVTLYQDAHVDDGTLPSVHLDGGIQYRHGKCWEDMADAIRRARRLIYITGWSVFHPVRLVRRNNDPTQGTLGELLKVKSQEGVRVLVLVWDDPTSRSLLGFSTKGLMNTSDEETRRFFKHSSVQVLLCPRYGGKGHSFIKKSEVETIYTHHQKTMIVDAEAAQNRRKIVAFVGGLDLCNGRFDTPKHPLFRTLKTIHKDDFHNPNFVTTADDGPREPWHDLHSKIDGPAAYDVLANFEERWMKASKPRGIGRLRTSSDDSLLRLDRIPDIMGLSEASSANDNDPESWHVQVFRSIDSSSVKGFPKDPKEATGRNLLCGKNILIDMSIHAAYVKAIRSAQHFIYIENQYFLGSSFNWDSNKNLGANNLIPMEIALKIANKIRAREKFAAYIVIPMWPEGAPTSNPIQRILYWQHKTMQMMYQTIYKALVEVGLDGQLEPQDFLNFFCLGTREVGTREVPDGTVSVYNSPRKPPQLNAAQVQALKSRRFMIYVHSKGMVVDDEFVLIGSANINQRSLEGTRDTEIAMGGYQPHHSWAKKGSRPRGQIFGYRMSLWAEHLGFLEQEFEEPENMECVRRVRQLSELNWRQYAAEEVTEMPGHLLKYPVQVDRTGKVSSLPGYETFPDLGGKIIGSFLVVEENLTI.

The C2 domain maps to Pro31–Phe170. Asp232 contributes to the Ca(2+) binding site. The 36-residue stretch at Thr371–Arg406 folds into the PLD phosphodiesterase 1 domain. Residues His376, Lys378, and Asp383 contribute to the active site. His376 is an a 1,2-diacyl-sn-glycero-3-phosphate binding site. Ca(2+)-binding residues include His412 and His444. Gln572 contributes to the a 1,2-diacyl-sn-glycero-3-phosphate binding site. Ser692 carries the phosphoserine modification. The PLD phosphodiesterase 2 domain occupies Phe712–Ser739. Active-site residues include His717, Lys719, and Asp724. His717 is an a 1,2-diacyl-sn-glycero-3-phosphate binding site. Glu780 is a Ca(2+) binding site.

This sequence belongs to the phospholipase D family. C2-PLD subfamily. The cofactor is Ca(2+). As to expression, highly expressed in inflorescences and old leaves, moderately in stems, roots, siliques and young leaves and low in flowers.

It is found in the cytoplasm. Its subcellular location is the membrane. The enzyme catalyses a 1,2-diacyl-sn-glycero-3-phosphocholine + H2O = a 1,2-diacyl-sn-glycero-3-phosphate + choline + H(+). Inhibited by neomycin. Its function is as follows. Hydrolyzes glycerol-phospholipids at the terminal phosphodiesteric bond to generate phosphatidic acids (PA). Plays an important role in various cellular processes, including phytohormone action, vesicular trafficking, secretion, cytoskeletal arrangement, meiosis, tumor promotion, pathogenesis, membrane deterioration and senescence. Can use phosphatidylserine but prefers ethanolamine-containing lipids as substrates. The protein is Phospholipase D gamma 3 of Arabidopsis thaliana (Mouse-ear cress).